A 310-amino-acid chain; its full sequence is Protein N-terminal asparagine amidohydrolase (310 aa).

In terms of assembly, monomer.

The protein resides in the cytoplasm. The catalysed reaction is N-terminal L-asparaginyl-[protein] + H2O + H(+) = N-terminal L-aspartyl-[protein] + NH4(+). Its activity is regulated as follows. Inhibited by micromolar concentrations of copper and zinc ions. In terms of biological role, N-terminal asparagine deamidase that mediates deamidation of N-terminal asparagine residues to aspartate. Required for the ubiquitin-dependent turnover of intracellular proteins that initiate with Met-Asn. These proteins are acetylated on the retained initiator methionine and can subsequently be modified by the removal of N-acetyl methionine by acylaminoacid hydrolase (AAH). Conversion of the resulting N-terminal asparagine to aspartate by NTAN1/PNAD renders the protein susceptible to arginylation, polyubiquitination and degradation as specified by the N-end rule. This enzyme does not act on substrates with internal or C-terminal asparagines and does not act on glutamine residues in any position, nor on acetylated N-terminal peptidyl Asn. This Homo sapiens (Human) protein is Protein N-terminal asparagine amidohydrolase (NTAN1).